We begin with the raw amino-acid sequence, 258 residues long: Imidazole glycerol phosphate synthase subunit HisF (258 aa).

Residues D11 and D130 contribute to the active site.

This sequence belongs to the HisA/HisF family. As to quaternary structure, heterodimer of HisH and HisF.

The protein localises to the cytoplasm. It carries out the reaction 5-[(5-phospho-1-deoxy-D-ribulos-1-ylimino)methylamino]-1-(5-phospho-beta-D-ribosyl)imidazole-4-carboxamide + L-glutamine = D-erythro-1-(imidazol-4-yl)glycerol 3-phosphate + 5-amino-1-(5-phospho-beta-D-ribosyl)imidazole-4-carboxamide + L-glutamate + H(+). It participates in amino-acid biosynthesis; L-histidine biosynthesis; L-histidine from 5-phospho-alpha-D-ribose 1-diphosphate: step 5/9. Functionally, IGPS catalyzes the conversion of PRFAR and glutamine to IGP, AICAR and glutamate. The HisF subunit catalyzes the cyclization activity that produces IGP and AICAR from PRFAR using the ammonia provided by the HisH subunit. This Escherichia fergusonii (strain ATCC 35469 / DSM 13698 / CCUG 18766 / IAM 14443 / JCM 21226 / LMG 7866 / NBRC 102419 / NCTC 12128 / CDC 0568-73) protein is Imidazole glycerol phosphate synthase subunit HisF.